Here is a 395-residue protein sequence, read N- to C-terminus: Elongation factor Tu (395 aa).

Residues 10–204 form the tr-type G domain; the sequence is KPHVNIGTIG…AVDSYIPTPE (195 aa). The segment at 19 to 26 is G1; sequence GHVDHGKT. Residue 19–26 participates in GTP binding; that stretch reads GHVDHGKT. Thr-26 provides a ligand contact to Mg(2+). The interval 60 to 64 is G2; that stretch reads GITIS. The tract at residues 81–84 is G3; sequence DCPG. GTP contacts are provided by residues 81-85 and 136-139; these read DCPGH and NKCD. The interval 136–139 is G4; it reads NKCD. The segment at 174–176 is G5; the sequence is SAL.

This sequence belongs to the TRAFAC class translation factor GTPase superfamily. Classic translation factor GTPase family. EF-Tu/EF-1A subfamily. In terms of assembly, monomer.

The protein resides in the cytoplasm. The catalysed reaction is GTP + H2O = GDP + phosphate + H(+). GTP hydrolase that promotes the GTP-dependent binding of aminoacyl-tRNA to the A-site of ribosomes during protein biosynthesis. The chain is Elongation factor Tu from Listeria monocytogenes serotype 4b (strain CLIP80459).